Consider the following 383-residue polypeptide: Xylose/arabinose import ATP-binding protein XacJ (383 aa).

In terms of domain architecture, ABC transporter spans 4-235; it reads IQLTDLTKRF…PNNLFVAEFI (232 aa). An ATP-binding site is contributed by 36-43; it reads GPSGCGKS.

This sequence belongs to the ABC transporter superfamily. Carbohydrate uptake transporter-1 (CUT1) (TC 3.A.1.1) family. The complex is composed of two ATP-binding proteins (XacJ and XacK), two transmembrane proteins (XacH and XacI) and a solute-binding protein (XacG).

It localises to the cell membrane. It catalyses the reaction D-xylose(out) + ATP + H2O = D-xylose(in) + ADP + phosphate + H(+). It carries out the reaction L-arabinose(out) + ATP + H2O = L-arabinose(in) + ADP + phosphate + H(+). In terms of biological role, part of the ABC transporter complex XacGHIJK involved in the uptake of xylose and arabinose. Responsible for energy coupling to the transport system. This Haloferax volcanii (strain ATCC 29605 / DSM 3757 / JCM 8879 / NBRC 14742 / NCIMB 2012 / VKM B-1768 / DS2) (Halobacterium volcanii) protein is Xylose/arabinose import ATP-binding protein XacJ.